The chain runs to 112 residues: Histone H2B (112 aa).

The interval 1 to 24 is disordered; the sequence is MATPKSSSANRKKGGKKSHRKPKR. Residues 10-24 show a composition bias toward basic residues; sequence NRKKGGKKSHRKPKR.

This sequence belongs to the histone H2B family. The nucleosome is a histone octamer containing two molecules each of H2A, H2B, H3 and H4 assembled in one H3-H4 heterotetramer and two H2A-H2B heterodimers. The octamer wraps approximately 147 bp of DNA.

The protein localises to the nucleus. Its subcellular location is the chromosome. Its function is as follows. Core component of nucleosome. Nucleosomes wrap and compact DNA into chromatin, limiting DNA accessibility to the cellular machineries which require DNA as a template. Histones thereby play a central role in transcription regulation, DNA repair, DNA replication and chromosomal stability. DNA accessibility is regulated via a complex set of post-translational modifications of histones, also called histone code, and nucleosome remodeling. This chain is Histone H2B, found in Trypanosoma cruzi.